The primary structure comprises 371 residues: Phospho-N-acetylmuramoyl-pentapeptide-transferase (371 aa).

11 helical membrane passes run 21 to 41 (NHIL…DFYY), 46 to 66 (LTIP…IGIP), 92 to 112 (PTMG…ILYF), 119 to 139 (IILT…IDDF), 156 to 176 (ILLQ…NNLI), 182 to 202 (IANK…FVLL), 216 to 236 (GLLS…ILIE), 241 to 261 (NSTL…FLFL), 268 to 288 (LFMG…IALI), 296 to 316 (LIMG…VSIF), and 349 to 369 (IVSS…IFLI).

It belongs to the glycosyltransferase 4 family. MraY subfamily. Mg(2+) is required as a cofactor.

Its subcellular location is the cell inner membrane. It carries out the reaction UDP-N-acetyl-alpha-D-muramoyl-L-alanyl-gamma-D-glutamyl-meso-2,6-diaminopimeloyl-D-alanyl-D-alanine + di-trans,octa-cis-undecaprenyl phosphate = di-trans,octa-cis-undecaprenyl diphospho-N-acetyl-alpha-D-muramoyl-L-alanyl-D-glutamyl-meso-2,6-diaminopimeloyl-D-alanyl-D-alanine + UMP. Its pathway is cell wall biogenesis; peptidoglycan biosynthesis. Its function is as follows. Catalyzes the initial step of the lipid cycle reactions in the biosynthesis of the cell wall peptidoglycan: transfers peptidoglycan precursor phospho-MurNAc-pentapeptide from UDP-MurNAc-pentapeptide onto the lipid carrier undecaprenyl phosphate, yielding undecaprenyl-pyrophosphoryl-MurNAc-pentapeptide, known as lipid I. The polypeptide is Phospho-N-acetylmuramoyl-pentapeptide-transferase (Prochlorococcus marinus (strain NATL2A)).